The primary structure comprises 396 residues: L-lactate dehydrogenase (396 aa).

An FMN hydroxy acid dehydrogenase domain is found at 1–380; the sequence is MIISAASDYR…SGDSLVQELG (380 aa). Residue tyrosine 24 coordinates substrate. Residues serine 106 and glutamine 127 each coordinate FMN. Tyrosine 129 provides a ligand contact to substrate. Threonine 155 contributes to the FMN binding site. Substrate is bound at residue arginine 164. Residue lysine 251 participates in FMN binding. Residue histidine 275 is the Proton acceptor of the active site. Arginine 278 is a binding site for substrate. 306–330 contributes to the FMN binding site; it reads DSGIRNGLDVVRMIALGADTVLLGR.

Belongs to the FMN-dependent alpha-hydroxy acid dehydrogenase family. FMN is required as a cofactor.

The protein resides in the cell inner membrane. The catalysed reaction is (S)-lactate + A = pyruvate + AH2. In terms of biological role, catalyzes the conversion of L-lactate to pyruvate. Is coupled to the respiratory chain. This Salmonella paratyphi C (strain RKS4594) protein is L-lactate dehydrogenase.